We begin with the raw amino-acid sequence, 333 residues long: MTSPNPPSSGKPLKLRINRDSEGYLSLVTDTGEVYRCPICGNDKFIYNYERGEVVCIVCGAVVQEQLLDLGPEWRAFTSEERGQRARTGAPLTRLISEALTTVIDWRDKDVSGKELDIKRKLEVIRLRKWQTRARVQTSYERNFIQAAQELERLRSSMGIPRPCIEQALEIYRQALEKELVRGRSVEAMAAAALYMACRMMKMPRPLDELVRYTKASRREVARCYRLLLRELNVKVPISDPTLYISRIAEQLKLSGEVVKTAIDILQKAKKAGITAGKDPAGLAAAAVYIASLMHGDNRTQKDFAVAAGVTEVTVRNRYKELAKALNIKVPVK.

A TFIIB-type zinc finger spans residues 33–64 (EVYRCPICGNDKFIYNYERGEVVCIVCGAVVQ). Cys-37, Cys-40, Cys-56, and Cys-59 together coordinate Zn(2+). 2 repeat units span residues 149-232 (QELE…LREL) and 243-324 (LYIS…ELAK).

The protein belongs to the TFIIB family.

In terms of biological role, stabilizes TBP binding to an archaeal box-A promoter. Also responsible for recruiting RNA polymerase II to the pre-initiation complex (DNA-TBP-TFIIB). The chain is Transcription initiation factor IIB from Pyrobaculum neutrophilum (strain DSM 2338 / JCM 9278 / NBRC 100436 / V24Sta) (Thermoproteus neutrophilus).